Consider the following 403-residue polypeptide: Exodeoxyribonuclease 7 large subunit (403 aa).

This sequence belongs to the XseA family. In terms of assembly, heterooligomer composed of large and small subunits.

The protein localises to the cytoplasm. The enzyme catalyses Exonucleolytic cleavage in either 5'- to 3'- or 3'- to 5'-direction to yield nucleoside 5'-phosphates.. Functionally, bidirectionally degrades single-stranded DNA into large acid-insoluble oligonucleotides, which are then degraded further into small acid-soluble oligonucleotides. This Clostridium botulinum (strain Okra / Type B1) protein is Exodeoxyribonuclease 7 large subunit.